The following is a 114-amino-acid chain: SOSS complex subunit C homolog (114 aa).

Residues 1-10 (MAFQQHGNQE) show a composition bias toward polar residues. Residues 1 to 61 (MAFQQHGNQE…AGNTSASRIH (61 aa)) are disordered.

The protein belongs to the SOSS-C family.

The chain is SOSS complex subunit C homolog from Nematostella vectensis (Starlet sea anemone).